The primary structure comprises 619 residues: MACVLLFRLFLLLVLAAFSQGKRLGPTSPLRYSRFLDPSRAVFLRWDFDYEAEIITFELQVQTTGWVGLGITDRYTFVGSDLVVGGVLPNGNVYFSDQHLLDEDTLEQDGSQDAELLRLTEDAVSTTMRFSRPFRTCDPHDRDITSDTMRVLAAYGPDDIPKMSREHTFVKSIFLLQMLQYDDQDAPEDTIIHDLKISNFIIPEDDTTYACTFLPLPIVSKKHHIYKFEPILVERNETMVHHVLVYACGNSSVLPTGIGECYGSDPAFSLCSHVIAGWAVGGLSYQFPDDVGISIGTPFDPQWIRLEIHYSNFQNLPGIRDTSGMRLFYTSHLRKYDMGVLQLGISVFPIHFIPPGAEAFLSYGLCKTDKFEELNGAPVSDIYISACLLHTHLAGRSLQALQYRNGTQLQVVCKDFSYDFNLQESRDLPHPVVIKPGDELLIECHYQTLDRDFMTFGGASTINEMCLIFFFYYPRINISSCMGYPDIIYVTNELGEEASENPMENLMVLDNVEWTPENIKKAEKACKESQQTVLIKTIDEEVENTTGWIPDIIPTPRGPCLESTGGKVEPQDNTPAGFRAVPLALSGSNTATLRPLPMIAVLFLQGSLSCLLAMLQTGV.

The signal sequence occupies residues Met1–Gly21. Residues Lys22 to Arg594 lie on the Extracellular side of the membrane. The region spanning Arg40–Gly156 is the DOMON domain. Tyr209 is an active-site residue. Intrachain disulfides connect Cys211-Cys261 and Cys248-Cys271. The Cu cation site is built by His241 and His242. N-linked (GlcNAc...) asparagine glycosylation occurs at Asn250. 3 residues coordinate Cu cation: His309, His390, and His392. 2 disulfides stabilise this stretch: Cys366-Cys481 and Cys444-Cys466. The active site involves His390. Residue Asn405 is glycosylated (N-linked (GlcNAc...) asparagine). Met465 serves as a coordination point for Cu cation. Asn477 carries an N-linked (GlcNAc...) asparagine glycan. The chain crosses the membrane as a helical span at residues Pro595–Leu615. Residues Gln616 to Val619 are Cytoplasmic-facing.

It belongs to the copper type II ascorbate-dependent monooxygenase family. It depends on Cu(2+) as a cofactor. Expressed at low levels in thymus and testis.

The protein localises to the membrane. The protein is DBH-like monooxygenase protein 2 (Moxd2) of Mus musculus (Mouse).